Here is a 510-residue protein sequence, read N- to C-terminus: Cytochrome P450 monooxygenase ptmK (510 aa).

The chain crosses the membrane as a helical span at residues 2 to 22 (IIVTFFWVGIVLSAIWTFYKV). Residues Asn313, Asn408, and Asn443 are each glycosylated (N-linked (GlcNAc...) asparagine). Cys456 serves as a coordination point for heme.

The protein belongs to the cytochrome P450 family. Requires heme as cofactor.

It localises to the membrane. It participates in secondary metabolite biosynthesis. Functionally, cytochrome P450 monooxygenase; part of the gene cluster that mediates the biosynthesis of the indole diterpenes penitrems. The geranylgeranyl diphosphate (GGPP) synthase ptmG catalyzes the first step in penitrem biosynthesis via conversion of farnesyl pyrophosphate and isopentyl pyrophosphate into geranylgeranyl pyrophosphate (GGPP). Condensation of indole-3-glycerol phosphate with GGPP by the prenyl transferase ptmC then forms 3-geranylgeranylindole (3-GGI). Epoxidation by the FAD-dependent monooxygenase ptmM leads to a epoxidized-GGI that is substrate of the terpene cyclase ptmB for cyclization to yield paspaline. Paspaline is subsequently converted to 13-desoxypaxilline by the cytochrome P450 monooxygenase ptmP, the latter being then converted to paxilline by the cytochrome P450 monooxygenase ptmQ. Paxilline is converted to beta-paxitriol via C-10 ketoreduction by the short-chain dehydrogenase ptmH which can be monoprenylated at the C-20 by the indole diterpene prenyltransferase ptmD. A two-step elimination (acetylation and elimination) process performed by the O-acetyltransferase ptmV and ptmI leads to the production of the prenylated form of penijanthine. The FAD-linked oxidoreductase ptmO then converts the prenylated form of penijanthine into PC-M5 which is in turn transformed into PC-M4 by the aromatic dimethylallyltransferase ptmE. Five sequential oxidative transformations performed by the cytochrome P450 monooxygenases ptmK, ptmU, ptmL, ptmN and ptmJ yield the various penitrem compounds. PtmK, ptmU and ptmM are involved in the formation of the key bicyclic ring of penitrem C via the formation of the intermediates secopenitrem D and penitrem D. PtmL catalyzes the epoxidation of penitrem D and C to yield penitrem B and F, respectively. PtmJ catalyzes the last benzylic hydroxylation to convert penitrem B to prenitrem E and penitrem F to penitrem A. This is Cytochrome P450 monooxygenase ptmK from Penicillium ochrochloron.